A 350-amino-acid chain; its full sequence is Ion-translocating oxidoreductase complex subunit D (350 aa).

Transmembrane regions (helical) follow at residues 25 to 45 (ILCALPGVAVQCFFFGWGTVI), 89 to 109 (IPPLAPWWVTVIGTLFAIVIV), and 129 to 149 (VMLLISFPVQMTSWVAPSVIA). T185 is subject to FMN phosphoryl threonine. The next 5 membrane-spanning stretches (helical) occupy residues 212-232 (GFGVGWFWVNLAYLAGGLVML), 239-259 (WHITAGILAALFICSGVGYLL), 264-284 (FTGPLLHLFSGATMLAAFFIA), 298-318 (LVFGALIGILVYIIRTFGGYP), and 319-339 (DAFAFAILLANLCAPFIDHYM).

It belongs to the NqrB/RnfD family. In terms of assembly, the complex is composed of six subunits: RnfA, RnfB, RnfC, RnfD, RnfE and RnfG. The cofactor is FMN.

The protein localises to the cell inner membrane. Its function is as follows. Part of a membrane-bound complex that couples electron transfer with translocation of ions across the membrane. The sequence is that of Ion-translocating oxidoreductase complex subunit D from Shewanella sediminis (strain HAW-EB3).